Here is a 906-residue protein sequence, read N- to C-terminus: Protein translocase subunit SecA (906 aa).

Residues Q86, 104-108, and D499 each bind ATP; that span reads GEGKT. Positions 862 to 885 are disordered; sequence KPVVSRIDPKDRNPDDPTSWGRVS. Positions 890, 892, 901, and 902 each coordinate Zn(2+).

Belongs to the SecA family. Monomer and homodimer. Part of the essential Sec protein translocation apparatus which comprises SecA, SecYEG and auxiliary proteins SecDF-YajC and YidC. Zn(2+) is required as a cofactor.

It localises to the cell inner membrane. The protein localises to the cytoplasm. The enzyme catalyses ATP + H2O + cellular proteinSide 1 = ADP + phosphate + cellular proteinSide 2.. Functionally, part of the Sec protein translocase complex. Interacts with the SecYEG preprotein conducting channel. Has a central role in coupling the hydrolysis of ATP to the transfer of proteins into and across the cell membrane, serving both as a receptor for the preprotein-SecB complex and as an ATP-driven molecular motor driving the stepwise translocation of polypeptide chains across the membrane. The sequence is that of Protein translocase subunit SecA from Rickettsia massiliae (strain Mtu5).